Consider the following 325-residue polypeptide: Delta(1)-pyrroline-2-carboxylate reductase (325 aa).

Belongs to the ornithine cyclodeaminase/mu-crystallin family.

The enzyme catalyses L-proline + NAD(+) = 1-pyrroline-2-carboxylate + NADH + H(+). It carries out the reaction L-proline + NADP(+) = 1-pyrroline-2-carboxylate + NADPH + H(+). Catalyzes the reduction of Delta(1)-pyrroline-2-carboxylate (Pyr2C) to L-proline, using preferentially NADPH over NADH as the electron donor. Is likely involved in a degradation pathway that converts trans-3-hydroxy-L-proline (t3LHyp) to L-proline. The polypeptide is Delta(1)-pyrroline-2-carboxylate reductase (Bacillus thuringiensis subsp. konkukian (strain 97-27)).